Consider the following 287-residue polypeptide: Pantothenate synthetase (287 aa).

An ATP-binding site is contributed by 30–37 (MGNLHSGH). The active-site Proton donor is the His-37. (R)-pantoate is bound at residue Gln-61. Gln-61 contributes to the beta-alanine binding site. 149–152 (GEKD) contributes to the ATP binding site. Gln-155 is a (R)-pantoate binding site. Residues Val-178 and 186-189 (LSSR) contribute to the ATP site.

It belongs to the pantothenate synthetase family. Homodimer.

The protein resides in the cytoplasm. It carries out the reaction (R)-pantoate + beta-alanine + ATP = (R)-pantothenate + AMP + diphosphate + H(+). It participates in cofactor biosynthesis; (R)-pantothenate biosynthesis; (R)-pantothenate from (R)-pantoate and beta-alanine: step 1/1. Its function is as follows. Catalyzes the condensation of pantoate with beta-alanine in an ATP-dependent reaction via a pantoyl-adenylate intermediate. This Pseudomonas putida (strain ATCC 47054 / DSM 6125 / CFBP 8728 / NCIMB 11950 / KT2440) protein is Pantothenate synthetase.